A 108-amino-acid chain; its full sequence is Ig kappa chain V-V region HP 124E1 (108 aa).

The tract at residues 1–23 (DIQMTQTTSSLSASLGDRVTISC) is framework-1. Cysteine 23 and cysteine 88 are disulfide-bonded. The segment at 24–34 (RASQDINNYLN) is complementarity-determining-1. The segment at 35-49 (WYQQKPDGTVKLLIY) is framework-2. The complementarity-determining-2 stretch occupies residues 50–56 (YTSRLHS). The tract at residues 57-88 (GVPSRFSGSGSGTDYSLTISNLEQEDIATYFC) is framework-3. Residues 89 to 97 (QQGKTLPRT) form a complementarity-determining-3 region. The segment at 98–108 (FGGGTKLEIKR) is framework-4.

The sequence is that of Ig kappa chain V-V region HP 124E1 from Mus musculus (Mouse).